A 155-amino-acid polypeptide reads, in one-letter code: Large ribosomal subunit protein uL13 (155 aa).

The protein belongs to the universal ribosomal protein uL13 family. In terms of assembly, part of the 50S ribosomal subunit.

Functionally, this protein is one of the early assembly proteins of the 50S ribosomal subunit, although it is not seen to bind rRNA by itself. It is important during the early stages of 50S assembly. The chain is Large ribosomal subunit protein uL13 from Rickettsia bellii (strain OSU 85-389).